The following is a 600-amino-acid chain: Sulfite reductase [NADPH] flavoprotein alpha-component (600 aa).

One can recognise a Flavodoxin-like domain in the interval 63-201 (ITLISASQTG…VADQWRKQLT (139 aa)). Residues 69–74 (SQTGNA), 116–119 (STQG), and 152–161 (LGDTSYERFC) each bind FMN. One can recognise an FAD-binding FR-type domain in the interval 235–449 (QAPLTAALAT…IEHNDNFRLP (215 aa)). FAD is bound by residues threonine 323, histidine 357, 387-390 (RLYS), 405-407 (TVG), tyrosine 411, and 420-423 (GGAS). NADP(+) is bound by residues 520 to 521 (SR), 526 to 530 (KIYVQ), and aspartate 562. Position 600 (tyrosine 600) interacts with FAD.

Belongs to the NADPH-dependent sulphite reductase flavoprotein subunit CysJ family. The protein in the N-terminal section; belongs to the flavodoxin family. This sequence in the C-terminal section; belongs to the flavoprotein pyridine nucleotide cytochrome reductase family. Alpha(8)-beta(8). The alpha component is a flavoprotein, the beta component is a hemoprotein. FAD is required as a cofactor. Requires FMN as cofactor.

The catalysed reaction is hydrogen sulfide + 3 NADP(+) + 3 H2O = sulfite + 3 NADPH + 4 H(+). It participates in sulfur metabolism; hydrogen sulfide biosynthesis; hydrogen sulfide from sulfite (NADPH route): step 1/1. In terms of biological role, component of the sulfite reductase complex that catalyzes the 6-electron reduction of sulfite to sulfide. This is one of several activities required for the biosynthesis of L-cysteine from sulfate. The flavoprotein component catalyzes the electron flow from NADPH -&gt; FAD -&gt; FMN to the hemoprotein component. The protein is Sulfite reductase [NADPH] flavoprotein alpha-component of Photorhabdus laumondii subsp. laumondii (strain DSM 15139 / CIP 105565 / TT01) (Photorhabdus luminescens subsp. laumondii).